The sequence spans 542 residues: Chondroitin sulfate N-acetylgalactosaminyltransferase 2 (542 aa).

Residues 1–11 (MPRRGLILHTR) are Cytoplasmic-facing. A helical; Signal-anchor for type II membrane protein transmembrane segment spans residues 12–32 (THWLLLGLALLCSLVLFMYLL). At 33 to 542 (ECAPQTDGNA…AYRTNSEAVG (510 aa)) the chain is on the lumenal side. The N-linked (GlcNAc...) asparagine glycan is linked to asparagine 41. Residues 59–105 (ALLQEQEEHYQTRATSLKRQIAQLKQELQEMSEKMRSLQERRNVGAN) adopt a coiled-coil conformation. N-linked (GlcNAc...) asparagine glycosylation occurs at asparagine 333. A divalent metal cation-binding residues include aspartate 369 and histidine 486.

It belongs to the chondroitin N-acetylgalactosaminyltransferase family. In terms of tissue distribution, ubiquitous.

It is found in the golgi apparatus. The protein resides in the golgi stack membrane. The catalysed reaction is 3-O-(beta-D-GlcA-(1-&gt;3)-beta-D-Gal-(1-&gt;3)-beta-D-Gal-(1-&gt;4)-beta-D-Xyl)-L-seryl-[protein] + UDP-N-acetyl-alpha-D-galactosamine = 3-O-(beta-D-GalNAc-(1-&gt;4)-beta-D-GlcA-(1-&gt;3)-beta-D-Gal-(1-&gt;3)-beta-D-Gal-(1-&gt;4)-beta-D-Xyl)-L-seryl-[protein] + UDP + H(+). Functionally, transfers 1,4-N-acetylgalactosamine (GalNAc) from UDP-GalNAc to the non-reducing end of glucuronic acid (GlcUA). Required for addition of the first GalNAc to the core tetrasaccharide linker and for elongation of chondroitin chains. This chain is Chondroitin sulfate N-acetylgalactosaminyltransferase 2 (CSGALNACT2), found in Homo sapiens (Human).